A 103-amino-acid chain; its full sequence is Large ribosomal subunit protein bL21 (103 aa).

It belongs to the bacterial ribosomal protein bL21 family. As to quaternary structure, part of the 50S ribosomal subunit. Contacts protein L20.

Its function is as follows. This protein binds to 23S rRNA in the presence of protein L20. This is Large ribosomal subunit protein bL21 from Aromatoleum aromaticum (strain DSM 19018 / LMG 30748 / EbN1) (Azoarcus sp. (strain EbN1)).